Consider the following 377-residue polypeptide: Palmitoyltransferase ZDHHC16 (377 aa).

Topologically, residues 1-77 (MRGQRSLLLG…VYWLVDNVIR (77 aa)) are cytoplasmic. The helical transmembrane segment at 78-98 (WFGVVFVVLVIVLTGSIVAIA) threads the bilayer. Topologically, residues 99-116 (YLCVLPLILRTYSVPRLC) are lumenal. Residues 117–137 (WHFFYSHWNLILIVFHYYQAI) form a helical membrane-spanning segment. The Cytoplasmic portion of the chain corresponds to 138 to 198 (TTPPGYPPQG…NNCVGHYNHR (61 aa)). The DHHC domain occupies 155–205 (SICKKCIYPKPARTHHCSICNRCVLKMDHHCPWLNNCVGHYNHRYFFSFCF). The S-palmitoyl cysteine intermediate role is filled by C185. The helical transmembrane segment at 199–219 (YFFSFCFFMTLGCVYCSYGSW) threads the bilayer. The Lumenal segment spans residues 220–266 (DLFREAYAAIEKMKQLDKNKLQAVANQTYHQTPPPIFSFRERMTHKS). Residues 267–287 (LVYLWFLCSSVALALGALTVW) traverse the membrane as a helical segment. Residues 288–377 (HAVLISRGET…TAHSASVMAV (90 aa)) lie on the Cytoplasmic side of the membrane.

Belongs to the DHHC palmitoyltransferase family. As to quaternary structure, interacts with ABL1. Interacts with COPS5/JAB1.

Its subcellular location is the endoplasmic reticulum membrane. It catalyses the reaction L-cysteinyl-[protein] + hexadecanoyl-CoA = S-hexadecanoyl-L-cysteinyl-[protein] + CoA. In terms of biological role, palmitoyl acyltransferase that mediates palmitoylation of proteins such as PLN and ZDHHC6. Required during embryonic heart development and cardiac function, possibly by mediating palmitoylation of PLN, thereby affecting PLN phosphorylation and homooligomerization. Also required for eye development. Palmitoylates ZDHHC6, affecting the quaternary assembly of ZDHHC6, its localization, stability and function. May play a role in DNA damage response. May be involved in apoptosis regulation. Involved in the proliferation of neural stem cells by regulating the FGF/ERK pathway. This is Palmitoyltransferase ZDHHC16 from Macaca fascicularis (Crab-eating macaque).